Reading from the N-terminus, the 305-residue chain is tRNA dimethylallyltransferase (305 aa).

8 to 15 is a binding site for ATP; that stretch reads GPTAVGKT. 10 to 15 contributes to the substrate binding site; the sequence is TAVGKT. Residues 33-36 are interaction with substrate tRNA; that stretch reads DSRQ.

Belongs to the IPP transferase family. As to quaternary structure, monomer. The cofactor is Mg(2+).

The enzyme catalyses adenosine(37) in tRNA + dimethylallyl diphosphate = N(6)-dimethylallyladenosine(37) in tRNA + diphosphate. Catalyzes the transfer of a dimethylallyl group onto the adenine at position 37 in tRNAs that read codons beginning with uridine, leading to the formation of N6-(dimethylallyl)adenosine (i(6)A). The protein is tRNA dimethylallyltransferase of Thermotoga petrophila (strain ATCC BAA-488 / DSM 13995 / JCM 10881 / RKU-1).